Reading from the N-terminus, the 280-residue chain is 3-hydroxyanthranilate 3,4-dioxygenase (280 aa).

The tract at residues 1-160 is domain A (catalytic); the sequence is MAIPVNVKKW…SEQYKSGKPD (160 aa). O2 is bound at residue Arg-43. His-47, Glu-53, and His-91 together coordinate Fe cation. Glu-53 is a substrate binding site. Substrate is bound by residues Arg-95 and Glu-105. The linker stretch occupies residues 161–177; the sequence is PAQPIGKMPFFLNTEQV. The segment at 178 to 280 is domain B; the sequence is MEPFSFQNWL…IALSTSQVPA (103 aa).

The protein belongs to the 3-HAO family. As to quaternary structure, monomer. It depends on Fe(2+) as a cofactor.

Its subcellular location is the cytoplasm. It is found in the cytosol. The catalysed reaction is 3-hydroxyanthranilate + O2 = (2Z,4Z)-2-amino-3-carboxymuconate 6-semialdehyde. The protein operates within cofactor biosynthesis; NAD(+) biosynthesis; quinolinate from L-kynurenine: step 3/3. Catalyzes the oxidative ring opening of 3-hydroxyanthranilate to 2-amino-3-carboxymuconate semialdehyde, which spontaneously cyclizes to quinolinate. The polypeptide is 3-hydroxyanthranilate 3,4-dioxygenase (haao) (Xenopus tropicalis (Western clawed frog)).